The chain runs to 137 residues: Proofreading thioesterase EntH (137 aa).

The active-site Nucleophile or proton acceptor is Glu-63.

It belongs to the thioesterase PaaI family. As to quaternary structure, homotetramer. Dimer of dimers. Interacts specifically with the aryl carrier protein (ArCP) domain of EntB.

It is found in the cytoplasm. It functions in the pathway siderophore biosynthesis; enterobactin biosynthesis. Required for optimal enterobactin synthesis. Acts as a proofreading enzyme that prevents EntB misacylation by hydrolyzing the thioester bound existing between EntB and wrongly charged molecules. This Salmonella paratyphi A (strain AKU_12601) protein is Proofreading thioesterase EntH.